We begin with the raw amino-acid sequence, 214 residues long: Ribonuclease HII (214 aa).

Residues 26-214 (EIVCGVDEAG…PVRAALDLIR (189 aa)) form the RNase H type-2 domain. A divalent metal cation-binding residues include aspartate 32, glutamate 33, and aspartate 124.

The protein belongs to the RNase HII family. Requires Mn(2+) as cofactor. The cofactor is Mg(2+).

It localises to the cytoplasm. It catalyses the reaction Endonucleolytic cleavage to 5'-phosphomonoester.. Its function is as follows. Endonuclease that specifically degrades the RNA of RNA-DNA hybrids. This chain is Ribonuclease HII, found in Burkholderia lata (strain ATCC 17760 / DSM 23089 / LMG 22485 / NCIMB 9086 / R18194 / 383).